Consider the following 362-residue polypeptide: Sulfate/thiosulfate import ATP-binding protein CysA (362 aa).

The region spanning 3-237 (IEIHDLSKQF…PANPFVYEFL (235 aa)) is the ABC transporter domain. Residue 35–42 (GPSGSGKT) participates in ATP binding.

This sequence belongs to the ABC transporter superfamily. Sulfate/tungstate importer (TC 3.A.1.6) family. As to quaternary structure, the complex is composed of two ATP-binding proteins (CysA), two transmembrane proteins (CysT and CysW) and a solute-binding protein (CysP).

The protein resides in the cell inner membrane. The catalysed reaction is sulfate(out) + ATP + H2O = sulfate(in) + ADP + phosphate + H(+). It catalyses the reaction thiosulfate(out) + ATP + H2O = thiosulfate(in) + ADP + phosphate + H(+). In terms of biological role, part of the ABC transporter complex CysAWTP involved in sulfate/thiosulfate import. Responsible for energy coupling to the transport system. This is Sulfate/thiosulfate import ATP-binding protein CysA from Nitrosomonas europaea (strain ATCC 19718 / CIP 103999 / KCTC 2705 / NBRC 14298).